A 310-amino-acid polypeptide reads, in one-letter code: 5-oxoprolinase subunit C (310 aa).

The protein belongs to the PxpC family. In terms of assembly, forms a complex composed of PxpA, PxpB and PxpC.

It catalyses the reaction 5-oxo-L-proline + ATP + 2 H2O = L-glutamate + ADP + phosphate + H(+). Its function is as follows. Catalyzes the cleavage of 5-oxoproline to form L-glutamate coupled to the hydrolysis of ATP to ADP and inorganic phosphate. This Escherichia coli (strain K12) protein is 5-oxoprolinase subunit C.